We begin with the raw amino-acid sequence, 81 residues long: Protein K6 (81 aa).

This sequence belongs to the poxviridae K6 protein family.

The chain is Protein K6 from Homo sapiens (Human).